A 424-amino-acid polypeptide reads, in one-letter code: Methylenetetrahydrofolate--tRNA-(uracil-5-)-methyltransferase TrmFO 1 (424 aa).

8–13 (GAGLSG) is an FAD binding site.

Belongs to the MnmG family. TrmFO subfamily. FAD is required as a cofactor.

The protein resides in the cytoplasm. It catalyses the reaction uridine(54) in tRNA + (6R)-5,10-methylene-5,6,7,8-tetrahydrofolate + NADH + H(+) = 5-methyluridine(54) in tRNA + (6S)-5,6,7,8-tetrahydrofolate + NAD(+). It carries out the reaction uridine(54) in tRNA + (6R)-5,10-methylene-5,6,7,8-tetrahydrofolate + NADPH + H(+) = 5-methyluridine(54) in tRNA + (6S)-5,6,7,8-tetrahydrofolate + NADP(+). In terms of biological role, catalyzes the folate-dependent formation of 5-methyl-uridine at position 54 (M-5-U54) in all tRNAs. This chain is Methylenetetrahydrofolate--tRNA-(uracil-5-)-methyltransferase TrmFO 1, found in Mycoplasma mycoides subsp. mycoides SC (strain CCUG 32753 / NCTC 10114 / PG1).